A 98-amino-acid chain; its full sequence is Integration host factor subunit alpha (98 aa).

The interval 50-71 is disordered; it reads GNFDLRDKNQRPGRNPKTGEDI.

Belongs to the bacterial histone-like protein family. In terms of assembly, heterodimer of an alpha and a beta chain.

Its function is as follows. This protein is one of the two subunits of integration host factor, a specific DNA-binding protein that functions in genetic recombination as well as in transcriptional and translational control. This is Integration host factor subunit alpha from Proteus mirabilis (strain HI4320).